The chain runs to 365 residues: Chorismate synthase (365 aa).

An NADP(+)-binding site is contributed by arginine 48. Residues 125–127 (RSS), 238–239 (NA), glycine 278, 293–297 (KPTSS), and arginine 319 each bind FMN.

This sequence belongs to the chorismate synthase family. In terms of assembly, homotetramer. FMNH2 serves as cofactor.

The catalysed reaction is 5-O-(1-carboxyvinyl)-3-phosphoshikimate = chorismate + phosphate. The protein operates within metabolic intermediate biosynthesis; chorismate biosynthesis; chorismate from D-erythrose 4-phosphate and phosphoenolpyruvate: step 7/7. Its function is as follows. Catalyzes the anti-1,4-elimination of the C-3 phosphate and the C-6 proR hydrogen from 5-enolpyruvylshikimate-3-phosphate (EPSP) to yield chorismate, which is the branch point compound that serves as the starting substrate for the three terminal pathways of aromatic amino acid biosynthesis. This reaction introduces a second double bond into the aromatic ring system. In Ruthia magnifica subsp. Calyptogena magnifica, this protein is Chorismate synthase.